Here is a 153-residue protein sequence, read N- to C-terminus: 6,7-dimethyl-8-ribityllumazine synthase (153 aa).

5-amino-6-(D-ribitylamino)uracil is bound by residues Phe22, 56 to 58, and 80 to 82; these read AFE and TVI. 85–86 contributes to the (2S)-2-hydroxy-3-oxobutyl phosphate binding site; the sequence is ST. The active-site Proton donor is His88. Phe113 serves as a coordination point for 5-amino-6-(D-ribitylamino)uracil. Arg127 provides a ligand contact to (2S)-2-hydroxy-3-oxobutyl phosphate.

The protein belongs to the DMRL synthase family. Forms an icosahedral capsid composed of 60 subunits, arranged as a dodecamer of pentamers.

It carries out the reaction (2S)-2-hydroxy-3-oxobutyl phosphate + 5-amino-6-(D-ribitylamino)uracil = 6,7-dimethyl-8-(1-D-ribityl)lumazine + phosphate + 2 H2O + H(+). It functions in the pathway cofactor biosynthesis; riboflavin biosynthesis; riboflavin from 2-hydroxy-3-oxobutyl phosphate and 5-amino-6-(D-ribitylamino)uracil: step 1/2. Functionally, catalyzes the formation of 6,7-dimethyl-8-ribityllumazine by condensation of 5-amino-6-(D-ribitylamino)uracil with 3,4-dihydroxy-2-butanone 4-phosphate. This is the penultimate step in the biosynthesis of riboflavin. The polypeptide is 6,7-dimethyl-8-ribityllumazine synthase (Actinobacillus pleuropneumoniae (Haemophilus pleuropneumoniae)).